Reading from the N-terminus, the 586-residue chain is MSWLFGIKGSKGEGTGPPLPLPPVQPGGEGSGDGGAGDRPGPKDKWSNFDPTGLERAAKAARELEHSRHAKEALSLAQMQEQTLQLEHQAKLKEYEAAVEQLKGDQIRVQAEERRKTLSEETRQHQARAQYQDKLARQRYEDQLKQQQLLNEENLRKQEESVQKQEALRRATVEREMELRHKNEMLRVEAEARARAKAERENADIIREQIRLKAAEHRQTILESIRTAGTLFGEGFRAFVTDWDKVTATVAGLTLLAVGIYSAKNATSVAGRYIEARLGKPSLVRETSRITVLEALRHPIQVSRRLLSKPQDALEGVVLSPSLEARVRDIAIATRNTKKNKSLYRNVLMYGPPGTGKTLFAKKLALHSGMDYAIMTGGDVAPMGRDGVTAMHKVFDWASTSRRGLLLFVDEADAFLRKRATEKISEDLRATLNAFLHRTGQHSSKFMLVLASNQPEQFDWAINDRIDEMVSFELPQREERERLVRMYFDKYVLKPATEGKQRLKLAQFDYGKKCSEIAQLTEGMSGREISQLAVAWQAMAYASEDGVLTEAMMDARVQDAIQQHRQKMQWLKAEGSQPPTLRTQAE.

The interval 1 to 52 (MSWLFGIKGSKGEGTGPPLPLPPVQPGGEGSGDGGAGDRPGPKDKWSNFDPT) is disordered. N-acetylserine is present on Ser2. The tract at residues 2–49 (SWLFGIKGSKGEGTGPPLPLPPVQPGGEGSGDGGAGDRPGPKDKWSNF) is required for interaction with the inner surface of the mitochondrial outer membrane. The Mitochondrial intermembrane segment spans residues 2–245 (SWLFGIKGSK…FRAFVTDWDK (244 aa)). Over residues 27 to 38 (GGEGSGDGGAGD) the composition is skewed to gly residues. Positions 55–218 (ERAAKAAREL…QIRLKAAEHR (164 aa)) form a coiled coil. A helical membrane pass occupies residues 246 to 262 (VTATVAGLTLLAVGIYS). Topologically, residues 263-586 (AKNATSVAGR…QPPTLRTQAE (324 aa)) are mitochondrial matrix. Residues 289–304 (RITVLEALRHPIQVSR) are S100B-binding. An ATP-binding site is contributed by 351–358 (GPPGTGKT). Residue Lys490 is modified to N6-acetyllysine; alternate. Lys490 bears the N6-succinyllysine; alternate mark. An N6-acetyllysine mark is found at Lys494 and Lys512.

Belongs to the AAA ATPase family. In terms of assembly, can form homooligomers. Homodimer formation at the N-terminus may be regulated by ATP and is required for the interaction with the inner surface of the mitochondrial outer membrane and correct mitochondrial homeostasis. Interacts with components of the mitochondrial ribosome and with other proteins involved in mitochondrial RNA metabolism. May also interact with protein involved in lipid metabolism, including STARD9. May interact with FAM210A. Interacts with GADD45GIP1. Interacts with S100B in a Ca(+2)- and Zn(+2)-dependent manner; this interaction probably occurs in the cytosol prior to mitochondrial targeting. S100B could assist ATAD3A cytoplasmic processing, preventing aggregation and favoring mitochondrial localization. Interacts with HSP60/HSPD1. Forms heterooligomers with ATAD3B; this interaction may affect ATAD3A activity. Interacts with CLPB.

The protein resides in the mitochondrion inner membrane. It localises to the mitochondrion matrix. Its subcellular location is the mitochondrion nucleoid. Essential for mitochondrial network organization, mitochondrial metabolism and cell growth at organism and cellular level. May play an important role in mitochondrial protein synthesis. May also participate in mitochondrial DNA replication. May bind to mitochondrial DNA D-loops and contribute to nucleoid stability. Required for enhanced channeling of cholesterol for hormone-dependent steroidogenesis. Involved in mitochondrial-mediated antiviral innate immunity. Also involved in the mitochondrial DNA damage response by promoting signaling between damaged genomes and the mitochondrial membrane, leading to activation of the integrated stress response (ISR). The sequence is that of ATPase family AAA domain-containing protein 3 (ATAD3) from Bos taurus (Bovine).